The chain runs to 209 residues: Uracil phosphoribosyltransferase (209 aa).

5-phospho-alpha-D-ribose 1-diphosphate is bound by residues arginine 79, arginine 104, and aspartate 131–serine 139. Residues valine 194 and glycine 199 to alanine 201 each bind uracil. Aspartate 200 is a 5-phospho-alpha-D-ribose 1-diphosphate binding site.

This sequence belongs to the UPRTase family. Mg(2+) is required as a cofactor.

It catalyses the reaction UMP + diphosphate = 5-phospho-alpha-D-ribose 1-diphosphate + uracil. The protein operates within pyrimidine metabolism; UMP biosynthesis via salvage pathway; UMP from uracil: step 1/1. Its activity is regulated as follows. Allosterically activated by GTP. Catalyzes the conversion of uracil and 5-phospho-alpha-D-ribose 1-diphosphate (PRPP) to UMP and diphosphate. The protein is Uracil phosphoribosyltransferase of Bacillus cereus (strain Q1).